We begin with the raw amino-acid sequence, 314 residues long: Nodulation protein D 1 (314 aa).

Residues 6 to 63 (LDLNLLVALDALMTERNLTAAARQINLSQPAMSAAIARLRSYFRDELFTMRGRELVPT) enclose the HTH lysR-type domain. The segment at residues 23–42 (LTAAARQINLSQPAMSAAIA) is a DNA-binding region (H-T-H motif).

Belongs to the LysR transcriptional regulatory family.

In terms of biological role, nodD regulates the expression of the nodABCFE genes which encode other nodulation proteins. NodD is also a negative regulator of its own expression. Binds flavonoids as inducers. The chain is Nodulation protein D 1 (nodD1) from Bradyrhizobium elkanii.